The primary structure comprises 388 residues: Biotin synthase (388 aa).

Residues 47–277 (WFGRRVKLNY…DVEVRIAGGR (231 aa)) enclose the Radical SAM core domain. Residues Cys65, Cys69, and Cys72 each coordinate [4Fe-4S] cluster. [2Fe-2S] cluster contacts are provided by Cys109, Cys142, Cys202, and Arg272. A disordered region spans residues 335–371 (APAGGCGSEQSAGCGSHEGGGACGSAPAPRTDEARTD).

Belongs to the radical SAM superfamily. Biotin synthase family. Homodimer. [4Fe-4S] cluster serves as cofactor. It depends on [2Fe-2S] cluster as a cofactor.

It catalyses the reaction (4R,5S)-dethiobiotin + (sulfur carrier)-SH + 2 reduced [2Fe-2S]-[ferredoxin] + 2 S-adenosyl-L-methionine = (sulfur carrier)-H + biotin + 2 5'-deoxyadenosine + 2 L-methionine + 2 oxidized [2Fe-2S]-[ferredoxin]. The protein operates within cofactor biosynthesis; biotin biosynthesis; biotin from 7,8-diaminononanoate: step 2/2. Functionally, catalyzes the conversion of dethiobiotin (DTB) to biotin by the insertion of a sulfur atom into dethiobiotin via a radical-based mechanism. The polypeptide is Biotin synthase (Streptomyces avermitilis (strain ATCC 31267 / DSM 46492 / JCM 5070 / NBRC 14893 / NCIMB 12804 / NRRL 8165 / MA-4680)).